Consider the following 372-residue polypeptide: Ligninase LG3 (372 aa).

A signal peptide spans 1 to 21 (MAFKQLFAAISLALSLSAANA). Positions 22-28 (AAVIEKR) are excised as a propeptide. Intrachain disulfides connect cysteine 31–cysteine 43 and cysteine 62–cysteine 148. The active-site Proton acceptor is the histidine 75. 4 residues coordinate Ca(2+): aspartate 76, glycine 94, aspartate 96, and serine 98. Heme b is bound at residue histidine 204. Positions 205, 222, 224, 227, and 229 each coordinate Ca(2+). Cysteines 277 and 345 form a disulfide. Asparagine 285 carries N-linked (GlcNAc...) asparagine glycosylation. Residues 350-361 (FPTLTTLPGPET) are compositionally biased toward low complexity. The interval 350-372 (FPTLTTLPGPETSVQRIPPPPGA) is disordered.

It belongs to the peroxidase family. Ligninase subfamily. Requires heme b as cofactor. The cofactor is Ca(2+).

It carries out the reaction 1-(3,4-dimethoxyphenyl)-2-(2-methoxyphenoxy)propane-1,3-diol + H2O2 = 3,4-dimethoxybenzaldehyde + guaiacol + glycolaldehyde + H2O. The enzyme catalyses 2 (3,4-dimethoxyphenyl)methanol + H2O2 = 2 (3,4-dimethoxyphenyl)methanol radical + 2 H2O. It functions in the pathway secondary metabolite metabolism; lignin degradation. Its function is as follows. Depolymerization of lignin. Catalyzes the C(alpha)-C(beta) cleavage of the propyl side chains of lignin. The protein is Ligninase LG3 (GLG3) of Phanerodontia chrysosporium (White-rot fungus).